A 115-amino-acid chain; its full sequence is Large ribosomal subunit protein bL19 (115 aa).

Belongs to the bacterial ribosomal protein bL19 family.

In terms of biological role, this protein is located at the 30S-50S ribosomal subunit interface and may play a role in the structure and function of the aminoacyl-tRNA binding site. The protein is Large ribosomal subunit protein bL19 of Wigglesworthia glossinidia brevipalpis.